The primary structure comprises 362 residues: PDZ and LIM domain protein 3 (362 aa).

Positions 1-84 constitute a PDZ domain; that stretch reads MPQNVVLPGP…QLCLKIDRAE (84 aa). Residues Ser18, Ser92, and Ser263 each carry the phosphoserine modification. The segment at 261–282 is disordered; that stretch reads DGSDDRPAGTRSVRPVTKVHGG. An LIM zinc-binding domain is found at 290–349; sequence PLCDKCGSGIVGAVVKARDKYRHPECFVCADCNLNLKQKGYFFVEGELYCEMHARARTRP.

In terms of assembly, interacts with ACTN2. Forms a heterodimer with PDLIM4 (via LIM domain). As to expression, highly expressed in skeletal muscle and at low levels in the heart.

It localises to the cytoplasm. The protein resides in the myofibril. It is found in the sarcomere. The protein localises to the z line. In terms of biological role, may play a role in the organization of actin filament arrays within muscle cells. This is PDZ and LIM domain protein 3 (Pdlim3) from Rattus norvegicus (Rat).